A 73-amino-acid chain; its full sequence is Translation initiation factor IF-1 (73 aa).

An S1-like domain is found at 1 to 73 (MGKKEEAFEV…TKGRIVYRER (73 aa)).

The protein belongs to the IF-1 family. As to quaternary structure, component of the 30S ribosomal translation pre-initiation complex which assembles on the 30S ribosome in the order IF-2 and IF-3, IF-1 and N-formylmethionyl-tRNA(fMet); mRNA recruitment can occur at any time during PIC assembly.

It is found in the cytoplasm. Its function is as follows. One of the essential components for the initiation of protein synthesis. Stabilizes the binding of IF-2 and IF-3 on the 30S subunit to which N-formylmethionyl-tRNA(fMet) subsequently binds. Helps modulate mRNA selection, yielding the 30S pre-initiation complex (PIC). Upon addition of the 50S ribosomal subunit IF-1, IF-2 and IF-3 are released leaving the mature 70S translation initiation complex. This is Translation initiation factor IF-1 from Rhodopirellula baltica (strain DSM 10527 / NCIMB 13988 / SH1).